A 139-amino-acid polypeptide reads, in one-letter code: Gene 70 protein (139 aa).

The chain is Gene 70 protein (70) from Mycobacterium (Mycobacteriophage D29).